The sequence spans 493 residues: Tripartite motif-containing protein 5 (493 aa).

A2 is modified (N-acetylalanine). An RING-type zinc finger spans residues 15–59; sequence CPICLELLTQPLSLDCGHSFCQACLTANHKKSMLDKGESSCPVCR. S86 bears the Phosphoserine mark. Residues 90–132 form a B box-type zinc finger; the sequence is QKVDHCARHGEKLLLFCQEDGKVICWLCERSQEHRGHHTFLTE. Residues C95, H98, C117, and H123 each coordinate Zn(2+). Residues 131–240 adopt a coiled-coil conformation; sequence TEEVAREYQV…LISDLERRLQ (110 aa). Residues 185-198 are required for interaction with GABARAP and for autophagy; the sequence is FEQLRDILDWEESN. The B30.2/SPRY domain occupies 281 to 493; sequence LKGMLEVFRE…VPMTLCSPSS (213 aa).

This sequence belongs to the TRIM/RBCC family. Can form homodimers and homotrimers. In addition to lower-order dimerization, also exhibits a higher-order multimerization and both low- and high-order multimerizations are essential for its restriction activity. Interacts with BTBD1 and BTBD2. Interacts with PSMC4, PSMC5, PSMD7 and HSPA8/HSC70. Interacts (via B30.2/SPRY domain) with HSPA1A/B. Interacts with PSMC2, MAP3K7/TAK1, TAB2 and TAB3. Interacts with SQSTM1. Interacts with TRIM6 and TRIM34. Interacts with ULK1 (phosphorylated form), GABARAP, GABARAPL1, GABARAPL2, MAP1LC3A, MAP1LC3C and BECN1. In terms of processing, degraded in a proteasome-independent fashion in the absence of viral infection but in a proteasome-dependent fashion following exposure to restriction sensitive virus. Post-translationally, autoubiquitinated in a RING finger- and UBE2D2-dependent manner. Monoubiquitinated by TRIM21. Deubiquitinated by Yersinia YopJ. Ubiquitination may not lead to proteasomal degradation.

Its subcellular location is the cytoplasm. It localises to the nucleus. The enzyme catalyses S-ubiquitinyl-[E2 ubiquitin-conjugating enzyme]-L-cysteine + [acceptor protein]-L-lysine = [E2 ubiquitin-conjugating enzyme]-L-cysteine + N(6)-ubiquitinyl-[acceptor protein]-L-lysine.. Its pathway is protein modification; protein ubiquitination. Its function is as follows. Capsid-specific restriction factor that prevents infection from non-host-adapted retroviruses. Blocks viral replication early in the life cycle, after viral entry but before reverse transcription. In addition to acting as a capsid-specific restriction factor, also acts as a pattern recognition receptor that activates innate immune signaling in response to the retroviral capsid lattice. Binding to the viral capsid triggers its E3 ubiquitin ligase activity, and in concert with the heterodimeric ubiquitin conjugating enzyme complex UBE2V1-UBE2N (also known as UBC13-UEV1A complex) generates 'Lys-63'-linked polyubiquitin chains, which in turn are catalysts in the autophosphorylation of the MAP3K7/TAK1 complex (includes TAK1, TAB2, and TAB3). Activation of the MAP3K7/TAK1 complex by autophosphorylation results in the induction and expression of NF-kappa-B and MAPK-responsive inflammatory genes, thereby leading to an innate immune response in the infected cell. Plays a role in regulating autophagy through activation of autophagy regulator BECN1 by causing its dissociation from its inhibitors BCL2 and TAB2. The protein is Tripartite motif-containing protein 5 (TRIM5) of Pan paniscus (Pygmy chimpanzee).